We begin with the raw amino-acid sequence, 350 residues long: Bifunctional methylenetetrahydrofolate dehydrogenase/cyclohydrolase, mitochondrial (350 aa).

The transit peptide at 1 to 35 (MAAASFITSLVTRLLRSAQSGRLHQRPFHLSAVRN) directs the protein to the mitochondrion. K50 carries the post-translational modification N6-acetyllysine; alternate. K50 participates in a covalent cross-link: Glycyl lysine isopeptide (Lys-Gly) (interchain with G-Cter in SUMO2); alternate. Substrate contacts are provided by residues 84–88 (YVLNK) and 131–133 (VQL). NAD(+)-binding positions include 200–202 (GRS) and R233. Position 309–313 (309–313 (PGGVG)) interacts with substrate.

Belongs to the tetrahydrofolate dehydrogenase/cyclohydrolase family. In terms of assembly, homodimer. Mg(2+) serves as cofactor.

Its subcellular location is the mitochondrion. The enzyme catalyses (6R)-5,10-methylene-5,6,7,8-tetrahydrofolate + NAD(+) = (6R)-5,10-methenyltetrahydrofolate + NADH. It carries out the reaction (6R)-5,10-methenyltetrahydrofolate + H2O = (6R)-10-formyltetrahydrofolate + H(+). Functionally, although its dehydrogenase activity is NAD-specific, it can also utilize NADP at a reduced efficiency. This is Bifunctional methylenetetrahydrofolate dehydrogenase/cyclohydrolase, mitochondrial (MTHFD2) from Bos taurus (Bovine).